The primary structure comprises 386 residues: Protein MGF 360-4L (386 aa).

This sequence belongs to the asfivirus MGF 360 family.

In terms of biological role, plays a role in virus cell tropism, and may be required for efficient virus replication in macrophages. This is Protein MGF 360-4L from Ornithodoros (relapsing fever ticks).